A 586-amino-acid chain; its full sequence is Protein translocase subunit SecD (586 aa).

The next 6 helical transmembrane spans lie at 7 to 27, 418 to 438, 439 to 459, 465 to 485, 521 to 541, and 546 to 566; these read LILILLVTFFACLLIFPTLKW, SALALCLVFLFICVYYGLSGV, VAGFSLVIYNVFLILAILSAF, LTSIAGLILTMGMAVDINIVI, TFIAVLFLTLLGTGVIQGFAW, and GIVASLFSSLIFSRFILEFII.

It belongs to the SecD/SecF family. SecD subfamily. In terms of assembly, forms a complex with SecF. Part of the essential Sec protein translocation apparatus which comprises SecA, SecYEG and auxiliary proteins SecDF. Other proteins may also be involved.

It is found in the cell inner membrane. Functionally, part of the Sec protein translocase complex. Interacts with the SecYEG preprotein conducting channel. SecDF uses the proton motive force (PMF) to complete protein translocation after the ATP-dependent function of SecA. The protein is Protein translocase subunit SecD of Borreliella burgdorferi (strain ATCC 35210 / DSM 4680 / CIP 102532 / B31) (Borrelia burgdorferi).